The primary structure comprises 277 residues: General transcription factor IIF subunit 2 (277 aa).

The protein belongs to the TFIIF beta subunit family. Heterodimer of an alpha and a beta subunit.

It localises to the nucleus. Its function is as follows. TFIIF is a general transcription initiation factor that binds to RNA polymerase II and helps to recruit it to the initiation complex in collaboration with TFIIB. This chain is General transcription factor IIF subunit 2 (TfIIFbeta), found in Drosophila melanogaster (Fruit fly).